We begin with the raw amino-acid sequence, 184 residues long: MNRESDWLWVEPIMGSRRVSNFCWAAILLFGALGFFFVGISSYFGKDLIPFLSSQQILFVPQGVVMCFYGIAGLFLSFYLWCTIFWNVGSGYNKFDKKKKIVSLFRWGFPGENRRICINFFMKDIQGIRMEVQEGIYPRRTLYMKIKGQQDIPLTRIRENLTLGEIEEKAAELARFLRVSIEGL.

A run of 2 helical transmembrane segments spans residues 21–43 and 68–90; these read NFCW…ISSY and FYGI…NVGS.

This sequence belongs to the Ycf4 family.

The protein resides in the plastid. It localises to the chloroplast thylakoid membrane. In terms of biological role, seems to be required for the assembly of the photosystem I complex. The sequence is that of Photosystem I assembly protein Ycf4 from Physcomitrium patens (Spreading-leaved earth moss).